A 93-amino-acid polypeptide reads, in one-letter code: Precursor of CEP13 (93 aa).

Positions 1–27 (MARPRISISMICLLILIVGFVLQSSQA) are cleaved as a signal peptide. Positions 28–78 (RKVLVPYGTSKGLFLSALPKGNVPPSGPSDKGHTSPPDDTDQRMVPENSPE) are excised as a propeptide. The tract at residues 45–93 (LPKGNVPPSGPSDKGHTSPPDDTDQRMVPENSPEIYRRLESVPSPGVGH) is disordered. Hydroxyproline is present on residues proline 87 and proline 89.

It belongs to the C-terminally encoded plant signaling peptide (CEP) family. As to quaternary structure, interacts with CEP receptors (e.g. CEPR1 and CEPR2). Post-translationally, the mature small signaling peptide is generated by proteolytic processing of the longer precursor.

The protein localises to the secreted. It is found in the extracellular space. Its subcellular location is the apoplast. Its function is as follows. Extracellular signaling peptide that may regulate primary root growth rate and systemic nitrogen (N)-demand signaling. This Arabidopsis thaliana (Mouse-ear cress) protein is Precursor of CEP13.